The primary structure comprises 156 residues: Cyclic pyranopterin monophosphate synthase (156 aa).

Substrate contacts are provided by residues 73–75 (LCH) and 110–111 (ME). Asp-125 is an active-site residue.

It belongs to the MoaC family. As to quaternary structure, homohexamer; trimer of dimers.

The enzyme catalyses (8S)-3',8-cyclo-7,8-dihydroguanosine 5'-triphosphate = cyclic pyranopterin phosphate + diphosphate. Its pathway is cofactor biosynthesis; molybdopterin biosynthesis. In terms of biological role, catalyzes the conversion of (8S)-3',8-cyclo-7,8-dihydroguanosine 5'-triphosphate to cyclic pyranopterin monophosphate (cPMP). This is Cyclic pyranopterin monophosphate synthase from Pseudomonas entomophila (strain L48).